We begin with the raw amino-acid sequence, 280 residues long: UPF0276 protein NMB2142 (280 aa).

This sequence belongs to the UPF0276 family.

The protein is UPF0276 protein NMB2142 of Neisseria meningitidis serogroup B (strain ATCC BAA-335 / MC58).